The following is a 159-amino-acid chain: Small ribosomal subunit protein uS7 (159 aa).

It belongs to the universal ribosomal protein uS7 family. In terms of assembly, part of the 30S ribosomal subunit. Contacts proteins S9 and S11.

Its function is as follows. One of the primary rRNA binding proteins, it binds directly to 16S rRNA where it nucleates assembly of the head domain of the 30S subunit. Is located at the subunit interface close to the decoding center, probably blocks exit of the E-site tRNA. This chain is Small ribosomal subunit protein uS7, found in Sulfurihydrogenibium sp. (strain YO3AOP1).